The sequence spans 351 residues: Meiotically up-regulated gene 1 protein (351 aa).

The protein resides in the cytoplasm. Its function is as follows. Required for correct meiotic chromosome segregation. The polypeptide is Meiotically up-regulated gene 1 protein (mug1) (Schizosaccharomyces pombe (strain 972 / ATCC 24843) (Fission yeast)).